A 288-amino-acid polypeptide reads, in one-letter code: L-xylulose reductase (288 aa).

Isoleucine 39, asparagine 113, and lysine 147 together coordinate NADP(+). The active-site Proton donor is the serine 181. Residues tyrosine 196, lysine 200, isoleucine 228, and threonine 230 each contribute to the NADP(+) site. Tyrosine 196 (proton acceptor) is an active-site residue. Lysine 200 functions as the Lowers pKa of active site Tyr in the catalytic mechanism.

It belongs to the short-chain dehydrogenases/reductases (SDR) family.

The enzyme catalyses xylitol + NADP(+) = L-xylulose + NADPH + H(+). It participates in carbohydrate degradation; L-arabinose degradation via L-arabinitol; D-xylulose 5-phosphate from L-arabinose (fungal route): step 3/5. Functionally, L-xylulose reductase involved in the catabolism of L-arabinose through an oxidoreductive pathway. Catalyzes the NADPH-dependent reduction of L-xylulose. Is also able to convert D-xylulose, D-ribulose, L-sorbose, and D-fructose to their corresponding polyols. The protein is L-xylulose reductase of Hypocrea jecorina (strain QM6a) (Trichoderma reesei).